The primary structure comprises 194 residues: Fibroblast growth factor 7 (194 aa).

Positions 1–31 (MHKWILTWILPTLLYRSCFHIICLVGTISLA) are cleaved as a signal peptide. An N-linked (GlcNAc...) asparagine glycan is attached at N45.

Belongs to the heparin-binding growth factors family. As to quaternary structure, interacts with FGFBP1. Interacts with FGFR2. Affinity between fibroblast growth factors (FGFs) and their receptors is increased by heparan sulfate glycosaminoglycans that function as coreceptors. As to expression, epithelial cell.

It localises to the secreted. Functionally, plays an important role in the regulation of embryonic development, cell proliferation and cell differentiation. Required for normal branching morphogenesis. Growth factor active on keratinocytes. Possible major paracrine effector of normal epithelial cell proliferation. This is Fibroblast growth factor 7 (FGF7) from Homo sapiens (Human).